The following is a 313-amino-acid chain: 3-O-acetylpapaveroxine carboxylesterase CXE2 (313 aa).

The Involved in the stabilization of the negatively charged intermediate by the formation of the oxyanion hole motif lies at histidine 72–glycine 74. Catalysis depends on residues serine 158, aspartate 262, and histidine 292.

This sequence belongs to the 'GDXG' lipolytic enzyme family.

The enzyme catalyses 3-O-acetylpapaveroxine + H2O = narcotine hemiacetal + acetate + H(+). It participates in alkaloid biosynthesis. Functionally, carboxylesterase involved in the biosynthesis of the benzylisoquinoline alkaloid noscapine. Converts 3-O-acetylpapaveroxine to narcotine hemiacetal. The chain is 3-O-acetylpapaveroxine carboxylesterase CXE2 from Papaver somniferum (Opium poppy).